The following is a 122-amino-acid chain: Small ribosomal subunit protein uS13 (122 aa).

Residues 99–122 (RGQRTHTNARTRKGPAKAIAGKKK) are disordered.

Belongs to the universal ribosomal protein uS13 family. As to quaternary structure, part of the 30S ribosomal subunit. Forms a loose heterodimer with protein S19. Forms two bridges to the 50S subunit in the 70S ribosome.

Its function is as follows. Located at the top of the head of the 30S subunit, it contacts several helices of the 16S rRNA. In the 70S ribosome it contacts the 23S rRNA (bridge B1a) and protein L5 of the 50S subunit (bridge B1b), connecting the 2 subunits; these bridges are implicated in subunit movement. Contacts the tRNAs in the A and P-sites. This chain is Small ribosomal subunit protein uS13, found in Allorhizobium ampelinum (strain ATCC BAA-846 / DSM 112012 / S4) (Agrobacterium vitis (strain S4)).